The following is a 265-amino-acid chain: Glutamate racemase (265 aa).

Substrate is bound by residues aspartate 9 to serine 10 and tyrosine 41 to serine 42. Cysteine 73 functions as the Proton donor/acceptor in the catalytic mechanism. Asparagine 74–threonine 75 is a substrate binding site. The active-site Proton donor/acceptor is cysteine 184. Threonine 185–histidine 186 provides a ligand contact to substrate.

This sequence belongs to the aspartate/glutamate racemases family.

It catalyses the reaction L-glutamate = D-glutamate. It participates in cell wall biogenesis; peptidoglycan biosynthesis. Functionally, provides the (R)-glutamate required for cell wall biosynthesis. This is Glutamate racemase from Actinobacillus pleuropneumoniae serotype 3 (strain JL03).